Here is a 234-residue protein sequence, read N- to C-terminus: 1-(5-phosphoribosyl)-5-[(5-phosphoribosylamino)methylideneamino] imidazole-4-carboxamide isomerase (234 aa).

The active-site Proton acceptor is D9. The Proton donor role is filled by D131.

Belongs to the HisA/HisF family.

It localises to the cytoplasm. It catalyses the reaction 1-(5-phospho-beta-D-ribosyl)-5-[(5-phospho-beta-D-ribosylamino)methylideneamino]imidazole-4-carboxamide = 5-[(5-phospho-1-deoxy-D-ribulos-1-ylimino)methylamino]-1-(5-phospho-beta-D-ribosyl)imidazole-4-carboxamide. Its pathway is amino-acid biosynthesis; L-histidine biosynthesis; L-histidine from 5-phospho-alpha-D-ribose 1-diphosphate: step 4/9. The sequence is that of 1-(5-phosphoribosyl)-5-[(5-phosphoribosylamino)methylideneamino] imidazole-4-carboxamide isomerase from Staphylococcus aureus (strain bovine RF122 / ET3-1).